We begin with the raw amino-acid sequence, 473 residues long: 3-isopropylmalate dehydratase large subunit 2 (473 aa).

The [4Fe-4S] cluster site is built by cysteine 350, cysteine 410, and cysteine 413.

The protein belongs to the aconitase/IPM isomerase family. LeuC type 1 subfamily. In terms of assembly, heterodimer of LeuC and LeuD. [4Fe-4S] cluster is required as a cofactor.

It carries out the reaction (2R,3S)-3-isopropylmalate = (2S)-2-isopropylmalate. It participates in amino-acid biosynthesis; L-leucine biosynthesis; L-leucine from 3-methyl-2-oxobutanoate: step 2/4. Catalyzes the isomerization between 2-isopropylmalate and 3-isopropylmalate, via the formation of 2-isopropylmaleate. The polypeptide is 3-isopropylmalate dehydratase large subunit 2 (Salmonella choleraesuis (strain SC-B67)).